The sequence spans 145 residues: 3-hydroxyacyl-[acyl-carrier-protein] dehydratase FabZ (145 aa).

The active site involves His-49.

Belongs to the thioester dehydratase family. FabZ subfamily.

The protein resides in the cytoplasm. It catalyses the reaction a (3R)-hydroxyacyl-[ACP] = a (2E)-enoyl-[ACP] + H2O. In terms of biological role, involved in unsaturated fatty acids biosynthesis. Catalyzes the dehydration of short chain beta-hydroxyacyl-ACPs and long chain saturated and unsaturated beta-hydroxyacyl-ACPs. This is 3-hydroxyacyl-[acyl-carrier-protein] dehydratase FabZ from Ehrlichia ruminantium (strain Gardel).